The following is a 303-amino-acid chain: Acetaldehyde dehydrogenase (303 aa).

Catalysis depends on cysteine 130, which acts as the Acyl-thioester intermediate. Residues 161-169 and asparagine 272 each bind NAD(+); that span reads SVGPGTRKN.

The protein belongs to the acetaldehyde dehydrogenase family.

It carries out the reaction acetaldehyde + NAD(+) + CoA = acetyl-CoA + NADH + H(+). The chain is Acetaldehyde dehydrogenase from Verminephrobacter eiseniae (strain EF01-2).